The chain runs to 613 residues: Kelch-like protein 36 (613 aa).

Residues 45–112 (CDVVLVVEEQ…LYSSELELDG (68 aa)) enclose the BTB domain. Positions 147–249 (YLYLQELASI…PEDILLQRVK (103 aa)) constitute a BACK domain. Kelch repeat units follow at residues 294–343 (CLLF…VLGG), 344–395 (FIFI…SIED), 396–442 (MLVA…IYKD), 444–491 (VYIS…SLGD), 492–544 (SIYS…VWQG), and 545–593 (RIYI…VCAL).

Interacts with CUL3.

Its pathway is protein modification; protein ubiquitination. Its function is as follows. Probable substrate-specific adapter of an E3 ubiquitin-protein ligase complex which mediates the ubiquitination and subsequent proteasomal degradation of target proteins. In Mus musculus (Mouse), this protein is Kelch-like protein 36 (Klhl36).